The chain runs to 190 residues: Large ribosomal subunit protein bL9 (190 aa).

Belongs to the bacterial ribosomal protein bL9 family.

Functionally, binds to the 23S rRNA. This Rhodobacter capsulatus (strain ATCC BAA-309 / NBRC 16581 / SB1003) protein is Large ribosomal subunit protein bL9.